The following is an 83-amino-acid chain: uncharacterized protein (83 aa).

The protein resides in the plastid. The protein localises to the chloroplast. This is an uncharacterized protein from Pinus thunbergii (Japanese black pine).